A 72-amino-acid chain; its full sequence is Translation initiation factor IF-1 (72 aa).

Residues 1–72 (MAKDDVIEID…DKGRITYRYK (72 aa)) form the S1-like domain.

Belongs to the IF-1 family. As to quaternary structure, component of the 30S ribosomal translation pre-initiation complex which assembles on the 30S ribosome in the order IF-2 and IF-3, IF-1 and N-formylmethionyl-tRNA(fMet); mRNA recruitment can occur at any time during PIC assembly.

It is found in the cytoplasm. Its function is as follows. One of the essential components for the initiation of protein synthesis. Stabilizes the binding of IF-2 and IF-3 on the 30S subunit to which N-formylmethionyl-tRNA(fMet) subsequently binds. Helps modulate mRNA selection, yielding the 30S pre-initiation complex (PIC). Upon addition of the 50S ribosomal subunit IF-1, IF-2 and IF-3 are released leaving the mature 70S translation initiation complex. The polypeptide is Translation initiation factor IF-1 (Campylobacter curvus (strain 525.92)).